We begin with the raw amino-acid sequence, 217 residues long: MLPSMLPPKSLRAVRIAVWLLALVPFLRLVVLGATDRYGANPLEFVTRSTGTWTLVLLCCTLAVTPLRRLTGMNWLIRIRRMLGLYTFFYGTLHFLIWLLVDRGLDPASMVKDIAKRPFITVGFAAFVLMIPLAATSTNAMVRRLGGRRWQWLHRLVYVTGVLGILHYWWHKAGKHDFAEVSIYAAVMAVLLGLRVWWVWRGARQGAIAGGAVPLRD.

The next 4 membrane-spanning stretches (helical) occupy residues 82–102 (MLGLYTFFYGTLHFLIWLLVD), 118–138 (PFITVGFAAFVLMIPLAATST), 150–170 (WQWLHRLVYVTGVLGILHYWW), and 180–200 (EVSIYAAVMAVLLGLRVWWVW).

Belongs to the MsrQ family. As to quaternary structure, heterodimer of a catalytic subunit (MsrP) and a heme-binding subunit (MsrQ). The cofactor is FMN. Heme b is required as a cofactor.

Its subcellular location is the cell inner membrane. Part of the MsrPQ system that repairs oxidized periplasmic proteins containing methionine sulfoxide residues (Met-O), using respiratory chain electrons. Thus protects these proteins from oxidative-stress damage caused by reactive species of oxygen and chlorine generated by the host defense mechanisms. MsrPQ is essential for the maintenance of envelope integrity under bleach stress, rescuing a wide series of structurally unrelated periplasmic proteins from methionine oxidation. MsrQ provides electrons for reduction to the reductase catalytic subunit MsrP, using the quinone pool of the respiratory chain. The chain is Protein-methionine-sulfoxide reductase heme-binding subunit MsrQ from Ralstonia nicotianae (strain ATCC BAA-1114 / GMI1000) (Ralstonia solanacearum).